We begin with the raw amino-acid sequence, 1026 residues long: Lon protease homolog, mitochondrial (1026 aa).

The transit peptide at 1 to 29 directs the protein to the mitochondrion; the sequence is MLGTRVTRAVYTRAPLKLQLRALGLHRRY. Disordered regions lie at residues 29–55 and 185–206; these read YVHNGSKNDEGSSTSTTTNKEENDKKL and ASEETKDEETVDKTESATDKVS. The 284-residue stretch at 62–345 folds into the Lon N-terminal domain; that stretch reads MLALPISRRP…KSLLVLKKEL (284 aa). Residues 185–194 show a composition bias toward acidic residues; it reads ASEETKDEET. Positions 195 to 206 are enriched in basic and acidic residues; sequence VDKTESATDKVS. 497–504 is a binding site for ATP; it reads GPPGVGKT. The disordered stretch occupies residues 711 to 785; sequence TEPLVSTSEE…EEEEDTSMIV (75 aa). Polar residues predominate over residues 714-737; that stretch reads LVSTSEEPQLSQTNQNISSSSAED. Residues 815–1001 form the Lon proteolytic domain; sequence TTPPGVIMGL…DDIYKRLFSG (187 aa). Catalysis depends on residues Ser-907 and Lys-950.

This sequence belongs to the peptidase S16 family. In terms of assembly, homohexamer or homoheptamer. Organized in a ring with a central cavity.

The protein resides in the mitochondrion matrix. The catalysed reaction is Hydrolysis of proteins in presence of ATP.. Functionally, ATP-dependent serine protease that mediates the selective degradation of misfolded, unassembled or oxidatively damaged polypeptides as well as certain short-lived regulatory proteins in the mitochondrial matrix. May also have a chaperone function in the assembly of inner membrane protein complexes. Participates in the regulation of mitochondrial gene expression and in the maintenance of the integrity of the mitochondrial genome. Binds to mitochondrial DNA in a site-specific manner. This chain is Lon protease homolog, mitochondrial, found in Candida glabrata (strain ATCC 2001 / BCRC 20586 / JCM 3761 / NBRC 0622 / NRRL Y-65 / CBS 138) (Yeast).